The chain runs to 1178 residues: DNA-directed RNA polymerase subunit beta' (1178 aa).

4 residues coordinate Zn(2+): C60, C62, C75, and C78. 3 residues coordinate Mg(2+): D450, D452, and D454. The Zn(2+) site is built by C795, C869, C876, and C879.

The protein belongs to the RNA polymerase beta' chain family. The RNAP catalytic core consists of 2 alpha, 1 beta, 1 beta' and 1 omega subunit. When a sigma factor is associated with the core the holoenzyme is formed, which can initiate transcription. It depends on Mg(2+) as a cofactor. Zn(2+) is required as a cofactor.

The enzyme catalyses RNA(n) + a ribonucleoside 5'-triphosphate = RNA(n+1) + diphosphate. DNA-dependent RNA polymerase catalyzes the transcription of DNA into RNA using the four ribonucleoside triphosphates as substrates. In Clostridium botulinum (strain ATCC 19397 / Type A), this protein is DNA-directed RNA polymerase subunit beta'.